A 436-amino-acid polypeptide reads, in one-letter code: GTPase Der (436 aa).

EngA-type G domains are found at residues 4–167 and 176–351; these read PIVA…NKES and IRLS…ENHK. Residues 10–17, 57–61, 119–122, 182–189, 229–233, and 294–297 each bind GTP; these read GKPNVGKS, DTGGI, NKVD, GRPNVGKS, DTAGM, and NKWD. Residues 352–436 enclose the KH-like domain; the sequence is KRVQSSTLNE…PIHIIPRKRN (85 aa).

This sequence belongs to the TRAFAC class TrmE-Era-EngA-EngB-Septin-like GTPase superfamily. EngA (Der) GTPase family. As to quaternary structure, associates with the 50S ribosomal subunit.

Its function is as follows. GTPase that plays an essential role in the late steps of ribosome biogenesis. The chain is GTPase Der from Staphylococcus epidermidis (strain ATCC 35984 / DSM 28319 / BCRC 17069 / CCUG 31568 / BM 3577 / RP62A).